The primary structure comprises 1500 residues: ABC transporter G family member 42 (1500 aa).

The tract at residues 26–56 (VDEAFMPQNSGGGGGSRGRRRSGRGGTADDD) is disordered. Positions 182–455 (LGLVGVRPGR…FESCGFRCPE (274 aa)) constitute an ABC transporter 1 domain. 215-222 (GPPSSGKT) provides a ligand contact to ATP. The 214-residue stretch at 533-746 (ELLKASFAKE…GYNALAVNEF (214 aa)) folds into the ABC transmembrane type-2 1 domain. The next 7 helical transmembrane spans lie at 551 to 571 (FVYI…STVF), 584 to 604 (GFVY…NGFA), 639 to 659 (IPFS…TIGF), 670 to 690 (LLLV…TAGL), 695 to 715 (IIAQ…GGFL), 724 to 744 (WWIW…LAVN), and 783 to 803 (FWIG…LFTL). The segment covering 822–834 (TAKEAEGNGDARH) has biased composition (basic and acidic residues). The disordered stretch occupies residues 822 to 850 (TAKEAEGNGDARHTVRNGSTKSNGGNHKE). Residues 837–846 (RNGSTKSNGG) are compositionally biased toward polar residues. One can recognise an ABC transporter 2 domain in the interval 894–1151 (MSFDDVNYYV…KMIEYFEAIP (258 aa)). 939 to 946 (GVSGAGKT) is an ATP binding site. An ABC transmembrane type-2 2 domain is found at 1224 to 1438 (GQFRACLWKQ…TVYGLIVTQY (215 aa)). 7 helical membrane-spanning segments follow: residues 1245 to 1265 (LVRF…FWKI), 1277 to 1297 (MVIG…CATV), 1331 to 1351 (IPYV…MMSF), 1358 to 1378 (FFWF…YGMM), 1388 to 1408 (VAAI…GFFI), 1416 to 1436 (WWIW…LIVT), and 1472 to 1492 (VVAP…AICI).

The protein belongs to the ABC transporter superfamily. ABCG family. PDR (TC 3.A.1.205) subfamily.

It localises to the membrane. Functionally, may be a general defense protein. The sequence is that of ABC transporter G family member 42 from Oryza sativa subsp. japonica (Rice).